Reading from the N-terminus, the 100-residue chain is Urease subunit gamma (100 aa).

Belongs to the urease gamma subunit family. Heterotrimer of UreA (gamma), UreB (beta) and UreC (alpha) subunits. Three heterotrimers associate to form the active enzyme.

It localises to the cytoplasm. The catalysed reaction is urea + 2 H2O + H(+) = hydrogencarbonate + 2 NH4(+). The protein operates within nitrogen metabolism; urea degradation; CO(2) and NH(3) from urea (urease route): step 1/1. The protein is Urease subunit gamma of Acetivibrio thermocellus (strain ATCC 27405 / DSM 1237 / JCM 9322 / NBRC 103400 / NCIMB 10682 / NRRL B-4536 / VPI 7372) (Clostridium thermocellum).